The sequence spans 285 residues: Guanylate kinase 2, chloroplastic/mitochondrial (285 aa).

Low complexity predominate over residues 1–19 (MLLTRRFSSALARSPLLPR). The transit peptide at 1–42 (MLLTRRFSSALARSPLLPRSLPPPRAVPATPPAPRPPPRRLM) directs the protein to the chloroplast and mitochondrion. Residues 1–66 (MLLTRRFSSA…PPPPSGADKD (66 aa)) form a disordered region. The span at 20-36 (SLPPPRAVPATPPAPRP) shows a compositional bias: pro residues. The span at 40–50 (RLMSSSSSGWH) shows a compositional bias: low complexity. Positions 91-272 (PMILVISGPS…AVKQVESIID (182 aa)) constitute a Guanylate kinase-like domain. 98-105 (GPSGVGKD) is a binding site for ATP. Residues arginine 130, arginine 224, and arginine 235 contribute to the active site. Asparagine 255 is an ATP binding site.

It belongs to the guanylate kinase family. As to quaternary structure, monomer.

It is found in the plastid. The protein resides in the chloroplast. It localises to the mitochondrion. It carries out the reaction GMP + ATP = GDP + ADP. Essential for recycling GMP and indirectly, cGMP. Essential for chloroplast differentiation at early stage of leaf development. May not be involved in the synthesis and maintenance of the organellar DNA during leaf development. This is Guanylate kinase 2, chloroplastic/mitochondrial (V2) from Oryza sativa subsp. japonica (Rice).